The following is a 1177-amino-acid chain: Lysylphosphatidylglycerol biosynthesis bifunctional protein LysX (1177 aa).

Disordered stretches follow at residues 1-40 (MRRAGRSRQFSSVEEAFSTSAARPGPRGRRSGRENTAKFV) and 61-85 (VTLASPGSRSGSGPRSGPRLGPRNR). The phosphatidylglycerol lysyltransferase stretch occupies residues 1–676 (MRRAGRSRQF…LLHHDGSAPD (676 aa)). The span at 65–85 (SPGSRSGSGPRSGPRLGPRNR) shows a compositional bias: low complexity. 6 helical membrane passes run 93–113 (VPAAAGWTVGVIATVSLLGSV), 135–155 (FPDTSIAWSFVLALLAAALTA), 159–179 (IAWLLLLGNMILAAALNVADI), 189–209 (IFGENLGFAVHIVAIVLLVLA), 227–247 (AVLVAGDVVGILVSWGLVELF), and 281–301 (VFLNAIFGLFGALALIMATIV). Residues 673–693 (SAPDVSGLRPERTDAEEARSR) are disordered. The segment at 677–1177 (VSGLRPERTD…TLPFPLAKPH (501 aa)) is lysine--tRNA ligase. A compositionally biased stretch (basic and acidic residues) spans 681–693 (RPERTDAEEARSR). Positions 738–816 (ITVAGRILRI…SLIVTDWRMI (79 aa)) form a DNA-binding region, OB. Mg(2+)-binding residues include aspartate 1089 and glutamate 1096.

It in the N-terminal section; belongs to the LPG synthetase family. The protein in the C-terminal section; belongs to the class-II aminoacyl-tRNA synthetase family. Mg(2+) serves as cofactor.

It localises to the cell membrane. The catalysed reaction is tRNA(Lys) + L-lysine + ATP = L-lysyl-tRNA(Lys) + AMP + diphosphate. The enzyme catalyses L-lysyl-tRNA(Lys) + a 1,2-diacyl-sn-glycero-3-phospho-(1'-sn-glycerol) = a 1,2-diacyl-sn-glycero-3-phospho-1'-(3'-O-L-lysyl)-sn-glycerol + tRNA(Lys). Catalyzes the production of L-lysyl-tRNA(Lys)transfer and the transfer of a lysyl group from L-lysyl-tRNA(Lys) to membrane-bound phosphatidylglycerol (PG), which produces lysylphosphatidylglycerol (LPG), one of the components of the bacterial membrane with a positive net charge. LPG synthesis contributes to the resistance to cationic antimicrobial peptides (CAMPs) and likely protects M.tuberculosis against the CAMPs produced by competiting microorganisms (bacteriocins). In fact, the modification of anionic phosphatidylglycerol with positively charged L-lysine results in repulsion of the peptides. The protein is Lysylphosphatidylglycerol biosynthesis bifunctional protein LysX (lysX) of Mycolicibacterium paratuberculosis (strain ATCC BAA-968 / K-10) (Mycobacterium paratuberculosis).